The chain runs to 190 residues: Lipid A acyltransferase PagP (190 aa).

The signal sequence occupies residues 1–18 (MKRLISCLTIICALNASA). Catalysis depends on residues His60, Asp103, and Ser104.

Belongs to the lipid A palmitoyltransferase family. In terms of assembly, homodimer.

It localises to the cell outer membrane. The enzyme catalyses a lipid A + a 1,2-diacyl-sn-glycero-3-phosphocholine = a hepta-acyl lipid A + a 2-acyl-sn-glycero-3-phosphocholine. It carries out the reaction a lipid IVA + a 1,2-diacyl-sn-glycero-3-phosphocholine = a lipid IVB + a 2-acyl-sn-glycero-3-phosphocholine. The catalysed reaction is a lipid IIA + a 1,2-diacyl-sn-glycero-3-phosphocholine = a lipid IIB + a 2-acyl-sn-glycero-3-phosphocholine. In terms of biological role, transfers a fatty acid residue from the sn-1 position of a phospholipid to the N-linked hydroxyfatty acid chain on the proximal unit of lipid A or its precursors. This chain is Lipid A acyltransferase PagP, found in Legionella pneumophila subsp. pneumophila (strain Philadelphia 1 / ATCC 33152 / DSM 7513).